Reading from the N-terminus, the 361-residue chain is Probable dual-specificity RNA methyltransferase RlmN (361 aa).

Residue Glu91 is the Proton acceptor of the active site. Residues 97–335 (QHYGLSVCVT…CVVRQEHGTD (239 aa)) form the Radical SAM core domain. Cys104 and Cys340 are joined by a disulfide. Residues Cys111, Cys115, and Cys118 each contribute to the [4Fe-4S] cluster site. S-adenosyl-L-methionine-binding positions include 163-164 (GE), Ser195, 218-220 (SLH), and Asn296. Residue Cys340 is the S-methylcysteine intermediate of the active site.

This sequence belongs to the radical SAM superfamily. RlmN family. The cofactor is [4Fe-4S] cluster.

Its subcellular location is the cytoplasm. It catalyses the reaction adenosine(2503) in 23S rRNA + 2 reduced [2Fe-2S]-[ferredoxin] + 2 S-adenosyl-L-methionine = 2-methyladenosine(2503) in 23S rRNA + 5'-deoxyadenosine + L-methionine + 2 oxidized [2Fe-2S]-[ferredoxin] + S-adenosyl-L-homocysteine. The catalysed reaction is adenosine(37) in tRNA + 2 reduced [2Fe-2S]-[ferredoxin] + 2 S-adenosyl-L-methionine = 2-methyladenosine(37) in tRNA + 5'-deoxyadenosine + L-methionine + 2 oxidized [2Fe-2S]-[ferredoxin] + S-adenosyl-L-homocysteine. In terms of biological role, specifically methylates position 2 of adenine 2503 in 23S rRNA and position 2 of adenine 37 in tRNAs. The polypeptide is Probable dual-specificity RNA methyltransferase RlmN (Streptococcus mutans serotype c (strain ATCC 700610 / UA159)).